Reading from the N-terminus, the 503-residue chain is AMP phosphorylase (503 aa).

Residues Gly168, 194 to 199, and Thr203 each bind AMP; that span reads SRAITS. Catalysis depends on Asp256, which acts as the Proton donor. Residues Ser264 and Lys288 each coordinate AMP.

The protein belongs to the thymidine/pyrimidine-nucleoside phosphorylase family. Type 2 subfamily.

The enzyme catalyses AMP + phosphate = alpha-D-ribose 1,5-bisphosphate + adenine. It carries out the reaction CMP + phosphate = cytosine + alpha-D-ribose 1,5-bisphosphate. The catalysed reaction is UMP + phosphate = alpha-D-ribose 1,5-bisphosphate + uracil. Catalyzes the conversion of AMP and phosphate to adenine and ribose 1,5-bisphosphate (R15P). Exhibits phosphorylase activity toward CMP and UMP in addition to AMP. Functions in an archaeal AMP degradation pathway, together with R15P isomerase and RubisCO. This chain is AMP phosphorylase, found in Thermococcus sibiricus (strain DSM 12597 / MM 739).